A 306-amino-acid polypeptide reads, in one-letter code: Pyridoxal 5'-phosphate synthase subunit PdxS (306 aa).

Position 36 (aspartate 36) interacts with D-ribose 5-phosphate. Lysine 93 acts as the Schiff-base intermediate with D-ribose 5-phosphate in catalysis. Glycine 165 provides a ligand contact to D-ribose 5-phosphate. Arginine 177 is a binding site for D-glyceraldehyde 3-phosphate. Residues glycine 226 and 247–248 (GS) each bind D-ribose 5-phosphate.

The protein belongs to the PdxS/SNZ family. In terms of assembly, in the presence of PdxT, forms a dodecamer of heterodimers.

The catalysed reaction is aldehydo-D-ribose 5-phosphate + D-glyceraldehyde 3-phosphate + L-glutamine = pyridoxal 5'-phosphate + L-glutamate + phosphate + 3 H2O + H(+). It participates in cofactor biosynthesis; pyridoxal 5'-phosphate biosynthesis. Its function is as follows. Catalyzes the formation of pyridoxal 5'-phosphate from ribose 5-phosphate (RBP), glyceraldehyde 3-phosphate (G3P) and ammonia. The ammonia is provided by the PdxT subunit. Can also use ribulose 5-phosphate and dihydroxyacetone phosphate as substrates, resulting from enzyme-catalyzed isomerization of RBP and G3P, respectively. In Salinispora arenicola (strain CNS-205), this protein is Pyridoxal 5'-phosphate synthase subunit PdxS.